We begin with the raw amino-acid sequence, 122 residues long: MYRLDVTNFRVWVSIGVSEQERYHKQPILVSVSLVFREEPKVCSTDEISDGICYAALVSLIEQTAANHPCALLERLAKVLLEKLEESLAQFVCKIDLRVSKERPPIPNLLSPVSFSISKEVP.

Substrate-binding positions include glutamate 21, tyrosine 54, and 73–74; that span reads LE. The active-site Proton donor/acceptor is lysine 101.

It belongs to the DHNA family.

It catalyses the reaction 7,8-dihydroneopterin = 6-hydroxymethyl-7,8-dihydropterin + glycolaldehyde. The protein operates within cofactor biosynthesis; tetrahydrofolate biosynthesis; 2-amino-4-hydroxy-6-hydroxymethyl-7,8-dihydropteridine diphosphate from 7,8-dihydroneopterin triphosphate: step 3/4. In terms of biological role, catalyzes the conversion of 7,8-dihydroneopterin to 6-hydroxymethyl-7,8-dihydropterin. This is Probable dihydroneopterin aldolase (folB) from Chlamydia muridarum (strain MoPn / Nigg).